We begin with the raw amino-acid sequence, 289 residues long: Elongation factor Ts (289 aa).

The segment at threonine 82–valine 85 is involved in Mg(2+) ion dislocation from EF-Tu.

It belongs to the EF-Ts family.

It is found in the cytoplasm. Its function is as follows. Associates with the EF-Tu.GDP complex and induces the exchange of GDP to GTP. It remains bound to the aminoacyl-tRNA.EF-Tu.GTP complex up to the GTP hydrolysis stage on the ribosome. This chain is Elongation factor Ts, found in Chloroherpeton thalassium (strain ATCC 35110 / GB-78).